The primary structure comprises 488 residues: Erythromycin resistance ATP-binding protein MsrA (488 aa).

Positions 6 to 199 (IKFNQINHKL…NQYEQEQLEQ (194 aa)) constitute an ABC transporter 1 domain. 38 to 45 (GGNGTGKT) provides a ligand contact to ATP. Residues 200 to 298 (QRKYEQYISE…KIYDIHNNYP (99 aa)) form a Q-linker, rich in Glu and hydrophilic AA region. A disordered region spans residues 211 to 255 (QRLSQASKAKRNQAQQMAQASSKQKNKSIAPDRLSASKEKGTVEK). Low complexity predominate over residues 222–233 (NQAQQMAQASSK). The span at 245-255 (SASKEKGTVEK) shows a compositional bias: basic and acidic residues. Residues 299 to 487 (IIAQNLTLVK…ELTGQSIHDI (189 aa)) form the ABC transporter 2 domain. Residue 331–338 (GANGVGKT) coordinates ATP.

Belongs to the ABC transporter superfamily.

Its function is as follows. Confers resistance to 14-membered ring macrolides (like erythromycin) and to B streptogramins, by acting as an ATP-dependent efflux pump. The protein is Erythromycin resistance ATP-binding protein MsrA (msrA) of Staphylococcus epidermidis.